A 434-amino-acid polypeptide reads, in one-letter code: Eukaryotic translation initiation factor 3 subunit E-1 (434 aa).

Positions Phe-219–Leu-392 constitute a PCI domain.

It belongs to the eIF-3 subunit E family. As to quaternary structure, component of the eukaryotic translation initiation factor 3 (eIF-3) complex. The eIF-3 complex interacts with pix. Interacts with mxt.

Its subcellular location is the cytoplasm. Its function is as follows. Component of the eukaryotic translation initiation factor 3 (eIF-3) complex, which is involved in protein synthesis of a specialized repertoire of mRNAs and, together with other initiation factors, stimulates binding of mRNA and methionyl-tRNAi to the 40S ribosome. The eIF-3 complex specifically targets and initiates translation of a subset of mRNAs involved in cell proliferation. This is Eukaryotic translation initiation factor 3 subunit E-1 (eIF3-S6-1) from Drosophila willistoni (Fruit fly).